We begin with the raw amino-acid sequence, 151 residues long: Deoxyuridine 5'-triphosphate nucleotidohydrolase (151 aa).

Residues 69–71 (RSG), N82, 86–88 (LID), and M96 each bind substrate.

The protein belongs to the dUTPase family. Mg(2+) is required as a cofactor.

It catalyses the reaction dUTP + H2O = dUMP + diphosphate + H(+). It functions in the pathway pyrimidine metabolism; dUMP biosynthesis; dUMP from dCTP (dUTP route): step 2/2. This enzyme is involved in nucleotide metabolism: it produces dUMP, the immediate precursor of thymidine nucleotides and it decreases the intracellular concentration of dUTP so that uracil cannot be incorporated into DNA. The sequence is that of Deoxyuridine 5'-triphosphate nucleotidohydrolase from Blochmanniella floridana.